The sequence spans 104 residues: Holotricin-3 (104 aa).

Residues 1 to 20 (MNKLIILGLACIIAVASAMP) form the signal peptide. A disordered region spans residues 22–104 (GPGDGHGGGH…HHGGYQTHGY (83 aa)). Over residues 23 to 97 (PGDGHGGGHG…PGGHGGGHHG (75 aa)) the composition is skewed to gly residues. 18 repeat units span residues 27–30 (HGGG), 31–34 (HGGG), 35–38 (HGGG), 39–42 (HGNG), 43–46 (QGGG), 47–50 (HGHG), 51–54 (PGGG), 55–58 (FGGG), 59–62 (HGGG), 63–66 (HGGG), 67–70 (GRGG), 71–74 (GGSG), 75–78 (GGGS), 79–82 (PGHG), 83–86 (AGGG), 87–90 (YPGG), 91–94 (HGGG), and 96–98 (HGG). An 18 X 4 AA approximate tandem repeats of H-G-G-G region spans residues 27–98 (HGGGHGGGHG…GGHGGGHHGG (72 aa)).

To T.molitor tenecin 3.

The protein localises to the secreted. Has antifungal activity against C.albicans. This chain is Holotricin-3, found in Holotrichia diomphalia (Korean black chafer).